A 288-amino-acid polypeptide reads, in one-letter code: Syntaxin-1A (288 aa).

At 1–265 (MKDRTQELRT…KYQSKARRKK (265 aa)) the chain is on the cytoplasmic side. Serine 14, serine 64, and serine 95 each carry phosphoserine. A coiled-coil region spans residues 68–109 (DEKTKEELEELMSDIKKTANKVRSKLKSIEQSIEQEEGLNRS). A Phosphoserine; by DAPK1 modification is found at serine 188. One can recognise a t-SNARE coiled-coil homology domain in the interval 192-254 (LSEIETRHSE…ERAVSDTKKA (63 aa)). Residues lysine 252, lysine 253, and lysine 256 each participate in a glycyl lysine isopeptide (Lys-Gly) (interchain with G-Cter in SUMO) cross-link. The chain crosses the membrane as a helical; Anchor for type IV membrane protein span at residues 266 to 286 (IMIIICCVIPGIVIASTVGGI). Residues 287–288 (FA) are Extracellular-facing.

This sequence belongs to the syntaxin family. Part of the SNARE core complex containing SNAP25, VAMP2 and STX1A; this complex constitutes the basic catalytic machinery of the complex neurotransmitter release apparatus. The SNARE complex interacts with CPLX1. Interacts with STXBP1. The interaction with STXBP1 promotes assembly of the SNARE complex. Interacts (via C-terminus) with KCNB1 (via C-terminus); the interaction increases in a calcium-dependent manner and induces a pore-independent enhancement of exocytosis in neuroendocrine cells, chromaffin cells, pancreatic beta cells and from the soma of dorsal root ganglia (DRG) neurons. Interacts with SYTL4. Interacts with STXBP6. Interacts with PLCL1 (via C2 domain). Interacts with OTOF. Interacts with LGI3. Interacts (via the H3 domain) with SLC6A4 (via the N-terminus); this interaction regulates SLC4A6 channel conductance in thalamocortical neurons. Interacts with SYT6 and SYT8; the interaction is Ca(2+)-dependent. Interacts with VAMP8. Interacts with SNAP23. Interacts with VAPA and SYBU. Interacts with PRRT2. Interacts with SEPT8. Interacts with STXBP5L. Interacts with synaptotagmin-1/SYT1. Interacts with SEPTIN5; in the cerebellar cortex. Interacts with SEPTIN4; in the striatum. Phosphorylated by CK2. Phosphorylation at Ser-188 by DAPK1 significantly decreases its interaction with STXBP1. Post-translationally, sumoylated, sumoylation is required for regulation of synaptic vesicle endocytosis.

The protein localises to the cytoplasmic vesicle. Its subcellular location is the secretory vesicle. It localises to the synaptic vesicle membrane. The protein resides in the cell membrane. It is found in the synapse. The protein localises to the synaptosome. Plays an essential role in hormone and neurotransmitter calcium-dependent exocytosis and endocytosis. Part of the SNARE (Soluble NSF Attachment Receptor) complex composed of SNAP25, STX1A and VAMP2 which mediates the fusion of synaptic vesicles with the presynaptic plasma membrane. STX1A and SNAP25 are localized on the plasma membrane while VAMP2 resides in synaptic vesicles. The pairing of the three SNAREs from the N-terminal SNARE motifs to the C-terminal anchors leads to the formation of the SNARE complex, which brings membranes into close proximity and results in final fusion. Participates in the calcium-dependent regulation of acrosomal exocytosis in sperm. Also plays an important role in the exocytosis of hormones such as insulin or glucagon-like peptide 1 (GLP-1). The chain is Syntaxin-1A (STX1A) from Pongo abelii (Sumatran orangutan).